The chain runs to 233 residues: Eukaryotic translation initiation factor 4E-1 (233 aa).

Residues 1–51 (MVVEDALKTSASEDQAKTETNPKPREEDDEPEEGEIVGDEESASKPSKGIA) are disordered. Positions 14–26 (DQAKTETNPKPRE) are enriched in basic and acidic residues. Residues 27–41 (EDDEPEEGEIVGDEE) are compositionally biased toward acidic residues. EIF4G-binding stretches follow at residues 55 to 58 (HALE) and 65 to 104 (FDSP…NNIR). MRNA is bound by residues 76–81 (KQEDWG), K108, and 126–127 (WE). C131 and C169 are oxidised to a cystine. The interval 152-161 (YTLLGMIGEQ) is EIF4G-binding. MRNA-binding positions include 176–181 (RNRQEK) and 221–225 (MRHER).

Belongs to the eukaryotic initiation factor 4E family. EIF4F is a multi-subunit complex, the composition of which varies with external and internal environmental conditions. It is composed of at least EIF4A, EIF4E and EIF4G. EIF4E is also known to interact with other partners. In higher plants two isoforms of EIF4F have been identified, named isoform EIF4F and isoform EIF(iso)4F. Isoform EIF4F has subunits p220 and p26, whereas isoform EIF(iso)4F has subunits p82 and p28. As to quaternary structure, (Microbial infection) Does not interact with the VPg of Plum pox virus (PPV) strain D. In terms of processing, according to the redox status, the Cys-131-Cys-169 disulfide bridge may have a role in regulating protein function by affecting its ability to bind capped mRNA. As to expression, mostly expressed in leaves, flower buds, leaf buds and anthers, to a lower extent in roots, stems and green immature fruit, and, at low levels, in petals.

The protein localises to the nucleus. The protein resides in the cytoplasm. Functionally, component of the protein complex eIF4F, which is involved in the recognition of the mRNA cap, ATP-dependent unwinding of 5'-terminal secondary structure and recruitment of mRNA to the ribosome. Recognizes and binds the 7-methylguanosine-containing mRNA cap during an early step in the initiation of protein synthesis and facilitates ribosome binding by inducing the unwinding of the mRNAs secondary structures. In terms of biological role, (Microbial infection) Not involved in the plum pox virus (PPV) strain D infection process. The sequence is that of Eukaryotic translation initiation factor 4E-1 from Prunus domestica (Garden plum).